We begin with the raw amino-acid sequence, 858 residues long: Phosphoenolpyruvate carboxylase (858 aa).

Catalysis depends on residues His-145 and Lys-531.

The protein belongs to the PEPCase type 1 family. Requires Mg(2+) as cofactor.

It catalyses the reaction oxaloacetate + phosphate = phosphoenolpyruvate + hydrogencarbonate. Forms oxaloacetate, a four-carbon dicarboxylic acid source for the tricarboxylic acid cycle. This is Phosphoenolpyruvate carboxylase from Thermus thermophilus (strain ATCC BAA-163 / DSM 7039 / HB27).